The following is a 419-amino-acid chain: NFATC2-interacting protein (419 aa).

2 disordered regions span residues 1–131 and 151–215; these read MAEP…GKVK and DEEE…HTRA. Residues 11–27 are compositionally biased toward gly residues; sequence WSGGSGAGRGGRGGWGG. Residues 35–51 are compositionally biased toward low complexity; sequence QRSPSRGTLDVVSVDLV. Residues serine 54, serine 84, serine 88, serine 90, serine 92, and serine 127 each carry the phosphoserine modification. Residues lysine 129 and lysine 131 each participate in a glycyl lysine isopeptide (Lys-Gly) (interchain with G-Cter in SUMO2) cross-link. Residues 180 to 192 show a composition bias toward basic and acidic residues; it reads RTKDKEEKKKTEF. 5 positions are modified to phosphoserine: serine 198, serine 201, serine 204, serine 220, and serine 314. The stretch at 209–231 forms a coiled coil; the sequence is SRTHTRALKKLSEVNKRLQDLRS. A phosphothreonine mark is found at threonine 316 and threonine 318. The region spanning 348 to 419 is the Ubiquitin-like domain; the sequence is LQLRVQGKEK…ESGDLIEVWG (72 aa). 2 positions are modified to phosphoserine: serine 369 and serine 390.

As to quaternary structure, interacts with NFATC2, TRAF1, TRAF2 and PRMT1. Interacts with UBE2I/UBC9. Methylation at the N-terminus by PRMT1 modulates interaction with the NFAT complex and results in augmented cytokine production.

The protein resides in the nucleus. It is found in the cytoplasm. Functionally, in T-helper 2 (Th2) cells, regulates the magnitude of NFAT-driven transcription of a specific subset of cytokine genes, including IL3, IL4, IL5 and IL13, but not IL2. Recruits PRMT1 to the IL4 promoter; this leads to enhancement of histone H4 'Arg-3'-methylation and facilitates subsequent histone acetylation at the IL4 locus, thus promotes robust cytokine expression. Down-regulates formation of poly-SUMO chains by UBE2I/UBC9. This is NFATC2-interacting protein (NFATC2IP) from Homo sapiens (Human).